Here is a 214-residue protein sequence, read N- to C-terminus: Probable transaldolase (214 aa).

K83 serves as the catalytic Schiff-base intermediate with substrate.

This sequence belongs to the transaldolase family. Type 3B subfamily.

It is found in the cytoplasm. It catalyses the reaction D-sedoheptulose 7-phosphate + D-glyceraldehyde 3-phosphate = D-erythrose 4-phosphate + beta-D-fructose 6-phosphate. It participates in carbohydrate degradation; pentose phosphate pathway; D-glyceraldehyde 3-phosphate and beta-D-fructose 6-phosphate from D-ribose 5-phosphate and D-xylulose 5-phosphate (non-oxidative stage): step 2/3. Its function is as follows. Transaldolase is important for the balance of metabolites in the pentose-phosphate pathway. This Desulfatibacillum aliphaticivorans protein is Probable transaldolase.